The following is a 270-amino-acid chain: CASP-like protein 4A1 (270 aa).

A disordered region spans residues 1–110 (MEELEKTQKF…PSFSSSSSTP (110 aa)). The Cytoplasmic segment spans residues 1–121 (MEELEKTQKF…ESKWASLIRK (121 aa)). The span at 24–66 (SSPINFEMSSRSSLHSLPQTTIESPPDSPTLSSIPDSHGSSPH) shows a compositional bias: polar residues. The span at 85 to 97 (NGEEEKKVSESRR) shows a compositional bias: basic and acidic residues. A compositionally biased stretch (low complexity) spans 100–110 (RPSFSSSSSTP). A helical membrane pass occupies residues 122 to 142 (ALLGFRVIAFVSCLVSFSVMV). Over 143–161 (SDRDKGWAHDSFYNYKEFR) the chain is Extracellular. A helical transmembrane segment spans residues 162–182 (FCLAANVIGFVYSGFMICDLV). Over 183–198 (YLLSTSIRRSRHNLRH) the chain is Cytoplasmic. A helical transmembrane segment spans residues 199–221 (FLEFGLDQMLAYLLASASTSASI). Over 222–246 (RVDDWQSNWGADKFPDLARASVALS) the chain is Extracellular. Residues 247-267 (YVSFVAFAFCSLASGYALCAL) form a helical membrane-spanning segment. Over 268–270 (RSI) the chain is Cytoplasmic.

Belongs to the Casparian strip membrane proteins (CASP) family. Homodimer and heterodimers.

It is found in the cell membrane. This chain is CASP-like protein 4A1, found in Arabidopsis thaliana (Mouse-ear cress).